A 354-amino-acid chain; its full sequence is Uroporphyrinogen decarboxylase (354 aa).

Substrate is bound by residues R27–R31, D77, Y154, T209, and H327.

The protein belongs to the uroporphyrinogen decarboxylase family. Homodimer.

It is found in the cytoplasm. It carries out the reaction uroporphyrinogen III + 4 H(+) = coproporphyrinogen III + 4 CO2. Its pathway is porphyrin-containing compound metabolism; protoporphyrin-IX biosynthesis; coproporphyrinogen-III from 5-aminolevulinate: step 4/4. Its function is as follows. Catalyzes the decarboxylation of four acetate groups of uroporphyrinogen-III to yield coproporphyrinogen-III. The polypeptide is Uroporphyrinogen decarboxylase (Escherichia coli O17:K52:H18 (strain UMN026 / ExPEC)).